A 517-amino-acid polypeptide reads, in one-letter code: Optineurin (517 aa).

Coiled coils occupy residues 15-127 (NLGS…DLVA) and 174-453 (KAES…LGRH). Disordered regions lie at residues 216–237 (KLEH…TNAS) and 454–488 (SMSE…WQQQ). The segment covering 222 to 237 (SSAQTSLPSAAETNAS) has biased composition (polar residues). Residues 487-517 (QQNIPDHACPKCGEVLPDLDSLQIHIMDCII) form a CCHC NOA-type zinc finger. Residues Cys495, Cys498, His511, and Cys515 each coordinate Zn(2+).

It localises to the cytoplasm. The protein resides in the perinuclear region. The protein localises to the golgi apparatus. It is found in the trans-Golgi network. Its subcellular location is the cytoplasmic vesicle. It localises to the recycling endosome. The protein resides in the autophagosome. Functionally, probably part of the TNF-alpha signaling pathway that can shift the equilibrium toward induction of cell death. May act by regulating membrane trafficking and cellular morphogenesis. This chain is Optineurin (optn), found in Danio rerio (Zebrafish).